The following is a 266-amino-acid chain: Glucosamine-6-phosphate deaminase (266 aa).

The active-site Proton acceptor; for enolization step is the Asp72. The For ring-opening step role is filled by Asp141. His143 serves as the catalytic Proton acceptor; for ring-opening step. The active-site For ring-opening step is the Glu148.

This sequence belongs to the glucosamine/galactosamine-6-phosphate isomerase family. NagB subfamily. As to quaternary structure, homohexamer.

The catalysed reaction is alpha-D-glucosamine 6-phosphate + H2O = beta-D-fructose 6-phosphate + NH4(+). It participates in amino-sugar metabolism; N-acetylneuraminate degradation; D-fructose 6-phosphate from N-acetylneuraminate: step 5/5. Allosterically activated by N-acetylglucosamine 6-phosphate (GlcNAc6P). In terms of biological role, catalyzes the reversible isomerization-deamination of glucosamine 6-phosphate (GlcN6P) to form fructose 6-phosphate (Fru6P) and ammonium ion. The sequence is that of Glucosamine-6-phosphate deaminase from Yersinia pestis bv. Antiqua (strain Antiqua).